The following is a 767-amino-acid chain: Cullin-1 (767 aa).

Residues 699-760 (DRKLLLQSAI…EKEYLERQGR (62 aa)) enclose the Cullin neddylation domain. Lysine 713 participates in a covalent cross-link: Glycyl lysine isopeptide (Lys-Gly) (interchain with G-Cter in NEDD8).

Belongs to the cullin family. Component of multiple Cul1-RING E3 ubiquitin-protein ligase complexes commonly known as SCF (SKP1-CUL1-F-box) complexes, consisting of cul1, skp1, pip1 and a variable F-box domain-containing protein as substrate-specific subunit. Binds to the pop1 homodimer, the pop2 homodimer and the pop1/pop2 heterodimer forming the SCF(pop1-pop2) complex. Interacts with pof3, pof14 and skp1. Post-translationally, neddylated; enhancing the ubiquitin-ligase activity.

Its subcellular location is the cytoplasm. The protein operates within protein modification; protein ubiquitination. In terms of biological role, core component of multiple cullin-RING-based SCF (SKP1-CUL1-F-box protein) E3 ubiquitin-protein ligase complexes, which mediate the ubiquitination of target proteins. The functional specificity of the SCF complex depends on the F-box protein as substrate recognition component. SCF(pop1-pop2) is required for the maintenance of ploidy and directs ubiquitination of cig2. The protein is Cullin-1 (cul1) of Schizosaccharomyces pombe (strain 972 / ATCC 24843) (Fission yeast).